Reading from the N-terminus, the 269-residue chain is tRNA (guanine-N(7)-)-methyltransferase (269 aa).

The disordered stretch occupies residues 1–38 (MDGVNDAANHTVESVPGRPSTASAPLEAGRRSPTGSRL). S-adenosyl-L-methionine contacts are provided by Glu-91, Glu-116, Asp-143, and Asp-166. Residue Asp-166 is part of the active site. Substrate contacts are provided by residues Lys-170, Asp-202, and 247 to 250 (TKFE).

This sequence belongs to the class I-like SAM-binding methyltransferase superfamily. TrmB family.

The catalysed reaction is guanosine(46) in tRNA + S-adenosyl-L-methionine = N(7)-methylguanosine(46) in tRNA + S-adenosyl-L-homocysteine. The protein operates within tRNA modification; N(7)-methylguanine-tRNA biosynthesis. Functionally, catalyzes the formation of N(7)-methylguanine at position 46 (m7G46) in tRNA. This chain is tRNA (guanine-N(7)-)-methyltransferase, found in Nocardia farcinica (strain IFM 10152).